The chain runs to 157 residues: ATP synthase subunit b (157 aa).

Residues 1–21 (MHFLDESFWLAISFIIFVYLI) traverse the membrane as a helical segment.

Belongs to the ATPase B chain family. F-type ATPases have 2 components, F(1) - the catalytic core - and F(0) - the membrane proton channel. F(1) has five subunits: alpha(3), beta(3), gamma(1), delta(1), epsilon(1). F(0) has three main subunits: a(1), b(2) and c(10-14). The alpha and beta chains form an alternating ring which encloses part of the gamma chain. F(1) is attached to F(0) by a central stalk formed by the gamma and epsilon chains, while a peripheral stalk is formed by the delta and b chains.

Its subcellular location is the cell inner membrane. Its function is as follows. F(1)F(0) ATP synthase produces ATP from ADP in the presence of a proton or sodium gradient. F-type ATPases consist of two structural domains, F(1) containing the extramembraneous catalytic core and F(0) containing the membrane proton channel, linked together by a central stalk and a peripheral stalk. During catalysis, ATP synthesis in the catalytic domain of F(1) is coupled via a rotary mechanism of the central stalk subunits to proton translocation. Functionally, component of the F(0) channel, it forms part of the peripheral stalk, linking F(1) to F(0). This Rickettsia bellii (strain RML369-C) protein is ATP synthase subunit b.